The following is a 368-amino-acid chain: Cytochrome b (368 aa).

Transmembrane regions (helical) follow at residues 25–45 (FGSM…FLAM), 69–90 (WIMQ…YIHI), 105–125 (WLSG…GYVL), and 170–190 (FFAL…IHII). Residues histidine 75 and histidine 89 each coordinate heme b. Positions 174 and 188 each coordinate heme b. Residue histidine 193 participates in a ubiquinone binding. Helical transmembrane passes span 218–238 (YKDM…MSFT), 280–300 (LGGT…PFTH), 312–332 (LTQT…WTAT), and 339–358 (FIFI…IINP).

The protein belongs to the cytochrome b family. The cytochrome bc1 complex contains 3 respiratory subunits (MT-CYB, CYC1 and UQCRFS1), 2 core proteins (UQCRC1 and UQCRC2) and probably 6 low-molecular weight proteins. It depends on heme b as a cofactor.

The protein localises to the mitochondrion inner membrane. Functionally, component of the ubiquinol-cytochrome c reductase complex (complex III or cytochrome b-c1 complex) that is part of the mitochondrial respiratory chain. The b-c1 complex mediates electron transfer from ubiquinol to cytochrome c. Contributes to the generation of a proton gradient across the mitochondrial membrane that is then used for ATP synthesis. This is Cytochrome b (MT-CYB) from Notechis ater (Black tiger snake).